The sequence spans 139 residues: Peptide methionine sulfoxide reductase MsrB (139 aa).

In terms of domain architecture, MsrB spans 8-130 (DREWQRELSP…NSASLQLKTQ (123 aa)). Zn(2+)-binding residues include Cys47, Cys50, Cys96, and Cys99. The Nucleophile role is filled by Cys119.

Belongs to the MsrB Met sulfoxide reductase family. Requires Zn(2+) as cofactor.

It catalyses the reaction L-methionyl-[protein] + [thioredoxin]-disulfide + H2O = L-methionyl-(R)-S-oxide-[protein] + [thioredoxin]-dithiol. This Acinetobacter baumannii (strain AB307-0294) protein is Peptide methionine sulfoxide reductase MsrB.